The chain runs to 360 residues: Peptide chain release factor 1 (360 aa).

The residue at position 237 (Gln237) is an N5-methylglutamine.

Belongs to the prokaryotic/mitochondrial release factor family. In terms of processing, methylated by PrmC. Methylation increases the termination efficiency of RF1.

Its subcellular location is the cytoplasm. Peptide chain release factor 1 directs the termination of translation in response to the peptide chain termination codons UAG and UAA. This chain is Peptide chain release factor 1, found in Pseudomonas putida (strain ATCC 700007 / DSM 6899 / JCM 31910 / BCRC 17059 / LMG 24140 / F1).